A 301-amino-acid polypeptide reads, in one-letter code: MGFMLYEGIDSKSIEEITEESEKTKTDLQKANTPNKTEAVHSLNNTCSEQNSGTKDYLNSLQFLPSNFRPKTHKKKKSVSSYLSSTIQKNANENIPHVQCRNDSQSTVTTRNPTPFKIEVGIYPSKPNNLNKEPPASTVHSDNLGDAVEHEWVELYDPLFPTSYSVFKESDYANLCETNWSHYVNQVPSLSIEAKLSNIVNASKSGIGPPPSLLSHATLARPSESMVLSNNIAAEDLDFFKKSPPVPAISKKENVALKMLQRCGWKEGQGLGQHNQGIINPLHVEISGFVTETKHSKINDK.

Positions 16-28 are enriched in basic and acidic residues; that stretch reads EITEESEKTKTDL. The disordered stretch occupies residues 16-38; it reads EITEESEKTKTDLQKANTPNKTE. Residues 29–38 are compositionally biased toward polar residues; that stretch reads QKANTPNKTE. In terms of domain architecture, G-patch spans 252-301; the sequence is KENVALKMLQRCGWKEGQGLGQHNQGIINPLHVEISGFVTETKHSKINDK.

This is an uncharacterized protein from Schizosaccharomyces pombe (strain 972 / ATCC 24843) (Fission yeast).